Reading from the N-terminus, the 139-residue chain is Putative pre-16S rRNA nuclease (139 aa).

The protein belongs to the YqgF nuclease family.

The protein resides in the cytoplasm. Could be a nuclease involved in processing of the 5'-end of pre-16S rRNA. The polypeptide is Putative pre-16S rRNA nuclease (Phocaeicola vulgatus (strain ATCC 8482 / DSM 1447 / JCM 5826 / CCUG 4940 / NBRC 14291 / NCTC 11154) (Bacteroides vulgatus)).